Here is a 352-residue protein sequence, read N- to C-terminus: MRKIIHVDMDCFFAAVEMRDDPRLRDIPLAIGGSKERRGVISTANYPARRYGVRSAMPTAMAFKLCPQLTLLPGRMAAYKEASQHIREIFARYTPLIEPLSLDEAYLDVSDSLACGGSATLIAQEIRQSIASELNLTASAGIAPIKFLAKIASELNKPNGQYVITPNQIQPFLQDLPLSKIPGVGAVTAKRLQALGLVTCGDIQKYPLAELLKHFGKFGRVLWERSHGIDEREISPDRLRKSVGVEKTLAEDIYDWESCEALIEELYLELETRLRKVKPSLHIARQGVKLKFHDFQQTTQEHTWPVLNKVDLLEIAHAAWHERRAERGVRLVGLHVTLLDPQLERQLLLDWG.

Residues 4–185 form the UmuC domain; sequence IIHVDMDCFF…LPLSKIPGVG (182 aa). Mg(2+) is bound by residues Asp8 and Asp103. The active site involves Glu104.

This sequence belongs to the DNA polymerase type-Y family. As to quaternary structure, monomer. Requires Mg(2+) as cofactor.

The protein localises to the cytoplasm. It carries out the reaction DNA(n) + a 2'-deoxyribonucleoside 5'-triphosphate = DNA(n+1) + diphosphate. Poorly processive, error-prone DNA polymerase involved in untargeted mutagenesis. Copies undamaged DNA at stalled replication forks, which arise in vivo from mismatched or misaligned primer ends. These misaligned primers can be extended by PolIV. Exhibits no 3'-5' exonuclease (proofreading) activity. May be involved in translesional synthesis, in conjunction with the beta clamp from PolIII. In Yersinia pestis bv. Antiqua (strain Antiqua), this protein is DNA polymerase IV.